A 249-amino-acid chain; its full sequence is Type III pantothenate kinase (249 aa).

8-15 serves as a coordination point for ATP; sequence DAGNSRLK. Substrate is bound by residues tyrosine 95 and 102 to 105; that span reads GVDR. The Proton acceptor role is filled by aspartate 104. Residue aspartate 125 coordinates K(+). Threonine 128 contributes to the ATP binding site. Threonine 179 serves as a coordination point for substrate.

This sequence belongs to the type III pantothenate kinase family. In terms of assembly, homodimer. Requires NH4(+) as cofactor. The cofactor is K(+).

The protein resides in the cytoplasm. The enzyme catalyses (R)-pantothenate + ATP = (R)-4'-phosphopantothenate + ADP + H(+). It functions in the pathway cofactor biosynthesis; coenzyme A biosynthesis; CoA from (R)-pantothenate: step 1/5. In terms of biological role, catalyzes the phosphorylation of pantothenate (Pan), the first step in CoA biosynthesis. The protein is Type III pantothenate kinase of Alkalilimnicola ehrlichii (strain ATCC BAA-1101 / DSM 17681 / MLHE-1).